A 169-amino-acid chain; its full sequence is Small ribosomal subunit protein uS13c (169 aa).

The transit peptide at 1–47 directs the protein to the chloroplast; the sequence is MAQMVAMPVAHSLSLICNWAKSNPLSRNTLALPASNTPNKQSLSIRC.

It belongs to the universal ribosomal protein uS13 family. In terms of assembly, part of the 30S ribosomal subunit.

It is found in the plastid. The protein localises to the chloroplast. Located at the top of the head of the 30S subunit, it contacts several helices of the 16S rRNA. The chain is Small ribosomal subunit protein uS13c (RPS13) from Arabidopsis thaliana (Mouse-ear cress).